The following is a 320-amino-acid chain: Putative malonate transporter (320 aa).

8 consecutive transmembrane segments (helical) span residues 1–21, 32–52, 65–85, 113–133, 167–187, 196–216, 256–276, and 289–309; these read MAEI…GYLT, MGWL…FKLV, FILT…AIGL, GLAL…IFCF, IAFH…FLSF, LIDY…GVTL, IWVQ…VFVI, and ATIL…LYLI.

It belongs to the auxin efflux carrier (TC 2.A.69) family.

It localises to the cell membrane. This Rhizobium meliloti (strain 1021) (Ensifer meliloti) protein is Putative malonate transporter (mdcF).